The sequence spans 325 residues: MLNKIINREDLSYEESYDLFNDLLNESEIKIGAYLSALQTKGFTANEIAGFAKAMRDNAIAIDLGKGISDTCGTGGDGYSTINISTAVSIILSCFTKVAKHGNVSITSKSGSANVLDALNIKKDCNPEEAKKMIDKTNFVFLFAPNYHPALKKIMPVRKELGIKTIFNILGPLANPANPDYQIMGVNSLDLVEKVGDALKLLGVKKALVVYGNGLDELNPNDYSTICEINENEENKIYKIHPKDIGLTPSNPIPCNSPDESAKRIIKIFSGTINEDRDFILLNAAAALYASNIAKDYKEGLKLAKEVIDNGTVLKKLKEIQKYGE.

5-phospho-alpha-D-ribose 1-diphosphate-binding positions include G73, 76–77 (GD), T81, 83–86 (NIST), 100–108 (KHGNVSITS), and S112. An anthranilate-binding site is contributed by G73. Residue S85 coordinates Mg(2+). N103 is an anthranilate binding site. Residue R158 participates in anthranilate binding. Positions 216 and 217 each coordinate Mg(2+).

This sequence belongs to the anthranilate phosphoribosyltransferase family. As to quaternary structure, homodimer. It depends on Mg(2+) as a cofactor.

The enzyme catalyses N-(5-phospho-beta-D-ribosyl)anthranilate + diphosphate = 5-phospho-alpha-D-ribose 1-diphosphate + anthranilate. The protein operates within amino-acid biosynthesis; L-tryptophan biosynthesis; L-tryptophan from chorismate: step 2/5. Catalyzes the transfer of the phosphoribosyl group of 5-phosphorylribose-1-pyrophosphate (PRPP) to anthranilate to yield N-(5'-phosphoribosyl)-anthranilate (PRA). The polypeptide is Anthranilate phosphoribosyltransferase (Methanococcus aeolicus (strain ATCC BAA-1280 / DSM 17508 / OCM 812 / Nankai-3)).